A 98-amino-acid chain; its full sequence is Integration host factor subunit alpha (98 aa).

A disordered region spans residues 49 to 71 (FGNFDLRDKNQRPGRNPKTGEDI).

Belongs to the bacterial histone-like protein family. As to quaternary structure, heterodimer of an alpha and a beta chain.

This protein is one of the two subunits of integration host factor, a specific DNA-binding protein that functions in genetic recombination as well as in transcriptional and translational control. The sequence is that of Integration host factor subunit alpha from Shewanella amazonensis (strain ATCC BAA-1098 / SB2B).